The chain runs to 89 residues: Small ribosomal subunit protein uS15 (89 aa).

Belongs to the universal ribosomal protein uS15 family. In terms of assembly, part of the 30S ribosomal subunit. Forms a bridge to the 50S subunit in the 70S ribosome, contacting the 23S rRNA.

Its function is as follows. One of the primary rRNA binding proteins, it binds directly to 16S rRNA where it helps nucleate assembly of the platform of the 30S subunit by binding and bridging several RNA helices of the 16S rRNA. Forms an intersubunit bridge (bridge B4) with the 23S rRNA of the 50S subunit in the ribosome. This Shewanella woodyi (strain ATCC 51908 / MS32) protein is Small ribosomal subunit protein uS15.